The chain runs to 397 residues: Natural killer cell receptor 2B4 (397 aa).

The N-terminal stretch at 1–19 (MLGQAVLFTTFLLLRAHQG) is a signal peptide. The Extracellular portion of the chain corresponds to 20–226 (QDCPDSSEEV…SVPSNFRFLP (207 aa)). Cys22 and Cys119 are joined by a disulfide. Ig-like domains lie at 22 to 129 (CPDS…LILD) and 131 to 215 (VETP…THGC). Residues Asn78, Asn145, Asn161, Asn178, Asn197, Asn206, and Asn210 are each glycosylated (N-linked (GlcNAc...) asparagine). Residues Cys154 and Cys196 are joined by a disulfide bond. Residues 227–247 (FGVIIVILVTLFLGAIICFCV) traverse the membrane as a helical segment. The Cytoplasmic portion of the chain corresponds to 248 to 397 (WTKKRKQLQF…RELENFDVYS (150 aa)). Residues 264 to 269 (TIYEYV) carry the ITSM 1 motif. Tyr266 is subject to Phosphotyrosine. Polar residues predominate over residues 277–290 (DQQGCSRASGSPSA). Positions 277–300 (DQQGCSRASGSPSAVQEDGRGQRE) are disordered. 3 short sequence motifs (ITSM) span residues 323 to 328 (TMYSMI), 342 to 347 (TVYSVV), and 367 to 372 (TVYEEV). The residue at position 325 (Tyr325) is a Phosphotyrosine; by FYN. Residue Tyr344 is modified to Phosphotyrosine. At Tyr369 the chain carries Phosphotyrosine; by FYN.

In terms of assembly, interacts with CD48. Interacts (via phosphorylated ITSM 1-4) with SH2D1A/SAP (via SH2 domain); SH2D1A probably mediates association with FYN. Interacts (via phosphorylated ITSM 3) with PTPN11/SHP-2, INPP5D/SHIP1, PTPN6/SHP-1 and CSK; binding of SH2D1A prevents association with PTPN11, PTPN6 and CSK. Interacts weakly (via phosphorylated ITSM 2) with PTPN11 and CSK. Interacts with SH2D1B and SH2D1B2. Interacts with MHC class I proteins; the interaction is proposed to prevent self-killing of NK cells. In terms of processing, N-linked glycosylation is essential for the binding to its ligand CD48. Also O-glycosylated, in contrast, O-linked sialylation has a negative impact on ligand binding. Post-translationally, phosphorylated by FYN and CSK on tyrosine residues following activation. Coligation with inhibitory receptors such as KIR2DL1 inhibits phosphorylation upon contact of NK cells with sensitive target cells. In terms of tissue distribution, expressed in natural killer (NK) cells, T cells and dendritic cells.

It localises to the membrane. The protein localises to the cell membrane. Its subcellular location is the membrane raft. In terms of biological role, heterophilic receptor of the signaling lymphocytic activation molecule (SLAM) family; its ligand is CD48. SLAM receptors triggered by homo- or heterotypic cell-cell interactions are modulating the activation and differentiation of a wide variety of immune cells and thus are involved in the regulation and interconnection of both innate and adaptive immune response. Activities are controlled by presence or absence of small cytoplasmic adapter proteins, SH2D1A/SAP and/or SH2D1B/EAT-2. Acts as activating natural killer (NK) cell receptor. Activating function implicates association with SH2D1A and FYN. Downstreaming signaling involves predominantly VAV1, and, to a lesser degree, INPP5D/SHIP1 and CBL. Signal attenuation in the absence of SH2D1A is proposed to be dependent on INPP5D and to a lesser extent PTPN6/SHP-1 and PTPN11/SHP-2. Stimulates NK cell cytotoxicity, production of IFN-gamma and granule exocytosis. Optimal expansion and activation of NK cells seems to be dependent on the engagement of CD244 with CD48 expressed on neighboring NK cells. Regulation of NK cell activity by adapters Sh2d1b and Sh2d1b2 is reported conflictingly. Acts as costimulator in NK activation by enhancing signals by other NK receptors such as NCR3 and NCR1. At early stages of NK cell differentiation may function as an inhibitory receptor possibly ensuring the self-tolerance of developing NK cells. Involved in the regulation of CD8(+) T-cell proliferation; expression on activated T-cells and binding to CD48 provides costimulatory-like function for neighboring T-cells. Inhibits inflammatory responses in dendritic cells (DCs). The polypeptide is Natural killer cell receptor 2B4 (Cd244) (Mus musculus (Mouse)).